The sequence spans 586 residues: 2-succinyl-5-enolpyruvyl-6-hydroxy-3-cyclohexene-1-carboxylate synthase (586 aa).

This sequence belongs to the TPP enzyme family. MenD subfamily. Homodimer. The cofactor is Mg(2+). Mn(2+) is required as a cofactor. It depends on thiamine diphosphate as a cofactor.

It catalyses the reaction isochorismate + 2-oxoglutarate + H(+) = 5-enolpyruvoyl-6-hydroxy-2-succinyl-cyclohex-3-ene-1-carboxylate + CO2. It participates in quinol/quinone metabolism; 1,4-dihydroxy-2-naphthoate biosynthesis; 1,4-dihydroxy-2-naphthoate from chorismate: step 2/7. The protein operates within cofactor biosynthesis; phylloquinone biosynthesis. Its function is as follows. Catalyzes the thiamine diphosphate-dependent decarboxylation of 2-oxoglutarate and the subsequent addition of the resulting succinic semialdehyde-thiamine pyrophosphate anion to isochorismate to yield 2-succinyl-5-enolpyruvyl-6-hydroxy-3-cyclohexene-1-carboxylate (SEPHCHC). In Acaryochloris marina (strain MBIC 11017), this protein is 2-succinyl-5-enolpyruvyl-6-hydroxy-3-cyclohexene-1-carboxylate synthase.